We begin with the raw amino-acid sequence, 1148 residues long: Pyruvate carboxylase (1148 aa).

The 457-residue stretch at 1 to 457 (MSQQSIQKVL…DTSFIDTTPE (457 aa)) folds into the Biotin carboxylation domain. The ATP site is built by Lys-121, Glu-205, and His-240. The region spanning 125-321 (REQAEKAGIP…IVQTQILVAQ (197 aa)) is the ATP-grasp domain. The active site involves Lys-242. In terms of domain architecture, Pyruvate carboxyltransferase spans 534-802 (VLLTDTTFRD…RPEMNVQGVE (269 aa)). Residues 542 to 546 (RDAHQ) and Arg-615 each bind substrate. Residue Asp-543 coordinates a divalent metal cation. Lys-712, His-741, and His-743 together coordinate a divalent metal cation. Lys-712 carries the post-translational modification N6-carboxylysine. Position 876 (Thr-876) interacts with substrate. A Biotinyl-binding domain is found at 1071–1146 (KADRTNPSHI…QTGDLLLEIE (76 aa)). Position 1112 is an N6-biotinyllysine (Lys-1112).

In terms of assembly, homotetramer. At very low potassium concentrations, when intracellular levels of c-di-AMP are low, interacts with apo-DarB. c-di-AMP inhibits the binding of DarB to PYC. Does not bind directly c-di-AMP. Biotin is required as a cofactor.

It catalyses the reaction hydrogencarbonate + pyruvate + ATP = oxaloacetate + ADP + phosphate + H(+). Activated by the cyclic di-AMP (c-di-AMP) receptor DarB in the absence of c-di-AMP. Allosterically activated by acetyl-CoA. Inhibited by the biotin-complexing protein avidin. Functionally, catalyzes a 2-step reaction, involving the ATP-dependent carboxylation of the covalently attached biotin in the first step and the transfer of the carboxyl group to pyruvate in the second, leading to oxaloacetate production. Fulfills an anaplerotic function in B.subtilis as it is necessary for growth on glucose, but is not required for sporulation. In Bacillus subtilis (strain 168), this protein is Pyruvate carboxylase (pyc).